A 368-amino-acid chain; its full sequence is Glutamate 5-kinase (368 aa).

Lys-10 lines the ATP pocket. Positions 50, 137, and 149 each coordinate substrate. 169–170 (TD) serves as a coordination point for ATP. Positions 276–354 (RGTLVLDDGA…ESIVRELGYM (79 aa)) constitute a PUA domain.

This sequence belongs to the glutamate 5-kinase family.

The protein resides in the cytoplasm. It catalyses the reaction L-glutamate + ATP = L-glutamyl 5-phosphate + ADP. It functions in the pathway amino-acid biosynthesis; L-proline biosynthesis; L-glutamate 5-semialdehyde from L-glutamate: step 1/2. Its function is as follows. Catalyzes the transfer of a phosphate group to glutamate to form L-glutamate 5-phosphate. The polypeptide is Glutamate 5-kinase (Pseudomonas savastanoi pv. phaseolicola (strain 1448A / Race 6) (Pseudomonas syringae pv. phaseolicola (strain 1448A / Race 6))).